Consider the following 276-residue polypeptide: NH(3)-dependent NAD(+) synthetase (276 aa).

An ATP-binding site is contributed by 43–50 (GISGGVDS). Asp-49 is a Mg(2+) binding site. A deamido-NAD(+)-binding site is contributed by Arg-146. Thr-166 contributes to the ATP binding site. Glu-171 contributes to the Mg(2+) binding site. The deamido-NAD(+) site is built by Lys-179 and Asp-186. Lys-195 and Thr-217 together coordinate ATP. Residue 266–267 (HK) participates in deamido-NAD(+) binding.

This sequence belongs to the NAD synthetase family. As to quaternary structure, homodimer.

It catalyses the reaction deamido-NAD(+) + NH4(+) + ATP = AMP + diphosphate + NAD(+) + H(+). It participates in cofactor biosynthesis; NAD(+) biosynthesis; NAD(+) from deamido-NAD(+) (ammonia route): step 1/1. Functionally, catalyzes the ATP-dependent amidation of deamido-NAD to form NAD. Uses ammonia as a nitrogen source. The protein is NH(3)-dependent NAD(+) synthetase of Vibrio vulnificus (strain CMCP6).